Consider the following 318-residue polypeptide: Glycerol 2-dehydrogenase (NADP(+)) (318 aa).

Catalysis depends on Tyr-52, which acts as the Proton donor. His-115 serves as a coordination point for substrate. 217–277 (SPLGSQNQVP…SSTPSRIESN (61 aa)) is an NADP(+) binding site.

Belongs to the aldo/keto reductase family.

It carries out the reaction glycerol + NADP(+) = dihydroxyacetone + NADPH + H(+). In terms of biological role, glycerol oxidoreductase probably involved in glycerol synthesis. This Hypocrea jecorina (Trichoderma reesei) protein is Glycerol 2-dehydrogenase (NADP(+)) (gld2).